A 252-amino-acid polypeptide reads, in one-letter code: Triosephosphate isomerase (252 aa).

Residue 10 to 12 coordinates substrate; that stretch reads NWK. The active-site Electrophile is histidine 96. Residue glutamate 168 is the Proton acceptor of the active site. Substrate is bound by residues glycine 174, serine 214, and 235 to 236; that span reads GG.

It belongs to the triosephosphate isomerase family. As to quaternary structure, homodimer.

Its subcellular location is the cytoplasm. The enzyme catalyses D-glyceraldehyde 3-phosphate = dihydroxyacetone phosphate. Its pathway is carbohydrate biosynthesis; gluconeogenesis. The protein operates within carbohydrate degradation; glycolysis; D-glyceraldehyde 3-phosphate from glycerone phosphate: step 1/1. Involved in the gluconeogenesis. Catalyzes stereospecifically the conversion of dihydroxyacetone phosphate (DHAP) to D-glyceraldehyde-3-phosphate (G3P). The sequence is that of Triosephosphate isomerase from Streptococcus pneumoniae serotype 2 (strain D39 / NCTC 7466).